The primary structure comprises 373 residues: Queuine tRNA-ribosyltransferase (373 aa).

The active-site Proton acceptor is the D93. Substrate is bound by residues 93 to 97 (DSGGF), D147, Q189, and G216. The RNA binding stretch occupies residues 247–253 (GVGAPED). D266 functions as the Nucleophile in the catalytic mechanism. An RNA binding; important for wobble base 34 recognition region spans residues 271–275 (TRIAR). Residues C304, C306, C309, and H335 each contribute to the Zn(2+) site.

It belongs to the queuine tRNA-ribosyltransferase family. Homodimer. Within each dimer, one monomer is responsible for RNA recognition and catalysis, while the other monomer binds to the replacement base PreQ1. Zn(2+) is required as a cofactor.

The catalysed reaction is 7-aminomethyl-7-carbaguanine + guanosine(34) in tRNA = 7-aminomethyl-7-carbaguanosine(34) in tRNA + guanine. It functions in the pathway tRNA modification; tRNA-queuosine biosynthesis. Catalyzes the base-exchange of a guanine (G) residue with the queuine precursor 7-aminomethyl-7-deazaguanine (PreQ1) at position 34 (anticodon wobble position) in tRNAs with GU(N) anticodons (tRNA-Asp, -Asn, -His and -Tyr). Catalysis occurs through a double-displacement mechanism. The nucleophile active site attacks the C1' of nucleotide 34 to detach the guanine base from the RNA, forming a covalent enzyme-RNA intermediate. The proton acceptor active site deprotonates the incoming PreQ1, allowing a nucleophilic attack on the C1' of the ribose to form the product. After dissociation, two additional enzymatic reactions on the tRNA convert PreQ1 to queuine (Q), resulting in the hypermodified nucleoside queuosine (7-(((4,5-cis-dihydroxy-2-cyclopenten-1-yl)amino)methyl)-7-deazaguanosine). The sequence is that of Queuine tRNA-ribosyltransferase from Halothermothrix orenii (strain H 168 / OCM 544 / DSM 9562).